The primary structure comprises 385 residues: Initiation-specific alpha-1,6-mannosyltransferase (385 aa).

Residues 1–15 are Cytoplasmic-facing; the sequence is MLQLREPQMVHKHLK. Residues 16–36 traverse the membrane as a helical; Signal-anchor for type II membrane protein segment; that stretch reads LAVLGIVVIFTTYFIISSLSS. Over 37–385 the chain is Lumenal; that stretch reads PTSTHKTEYN…KDDGMPEMEQ (349 aa). The DXD motif signature appears at 189-191; that stretch reads DID.

The protein belongs to the glycosyltransferase 32 family. Mn(2+) is required as a cofactor.

The protein localises to the endoplasmic reticulum membrane. Its subcellular location is the golgi apparatus membrane. The enzyme catalyses Transfers an alpha-D-mannosyl residue from GDP-mannose into lipid-linked oligosaccharide, forming an alpha-(1-&gt;6)-D-mannosyl-D-mannose linkage.. In terms of biological role, mannosyltransferase involved in outer chain elongation of asparagine-linked oligosaccharides of the type Man(9)GlcNAc(2). Adds the first alpha-1,6-mannose to the Man(8)GlcNAc(2) and Man(9)GlcNAc(2), but not Man(5)GlcNAc(2), endoplasmic reticulum intermediates. Represents the first enzymatic event required for synthesis of outer chain mannose linkages on yeast secretory proteins. N-glycan outer chain epitopes play a crucial role in the host-fungal interaction, virulence, and host immune response such as interleukin synthesis or phagocytosis by neutrophils. The sequence is that of Initiation-specific alpha-1,6-mannosyltransferase from Candida albicans (strain SC5314 / ATCC MYA-2876) (Yeast).